A 560-amino-acid chain; its full sequence is Arginine--tRNA ligase (560 aa).

Residues 135 to 145 carry the 'HIGH' region motif; it reads ANPTGLLHMGN.

The protein belongs to the class-I aminoacyl-tRNA synthetase family. Monomer.

It is found in the cytoplasm. The enzyme catalyses tRNA(Arg) + L-arginine + ATP = L-arginyl-tRNA(Arg) + AMP + diphosphate. The chain is Arginine--tRNA ligase from Moorella thermoacetica (strain ATCC 39073 / JCM 9320).